Reading from the N-terminus, the 394-residue chain is 1-deoxy-D-xylulose 5-phosphate reductoisomerase (394 aa).

NADPH is bound by residues Thr12, Gly13, Ser14, Ile15, Gly38, Asn41, and Asn132. Lys133 contacts 1-deoxy-D-xylulose 5-phosphate. Position 134 (Glu134) interacts with NADPH. A Mn(2+)-binding site is contributed by Asp156. Residues Ser157, Glu158, Ser182, and His205 each contribute to the 1-deoxy-D-xylulose 5-phosphate site. Glu158 lines the Mn(2+) pocket. Gly211 is an NADPH binding site. 1-deoxy-D-xylulose 5-phosphate is bound by residues Ser218, Asn223, Lys224, and Glu227. Residue Glu227 coordinates Mn(2+).

The protein belongs to the DXR family. Requires Mg(2+) as cofactor. Mn(2+) serves as cofactor.

The enzyme catalyses 2-C-methyl-D-erythritol 4-phosphate + NADP(+) = 1-deoxy-D-xylulose 5-phosphate + NADPH + H(+). It functions in the pathway isoprenoid biosynthesis; isopentenyl diphosphate biosynthesis via DXP pathway; isopentenyl diphosphate from 1-deoxy-D-xylulose 5-phosphate: step 1/6. Its function is as follows. Catalyzes the NADPH-dependent rearrangement and reduction of 1-deoxy-D-xylulose-5-phosphate (DXP) to 2-C-methyl-D-erythritol 4-phosphate (MEP). The sequence is that of 1-deoxy-D-xylulose 5-phosphate reductoisomerase from Pseudarthrobacter chlorophenolicus (strain ATCC 700700 / DSM 12829 / CIP 107037 / JCM 12360 / KCTC 9906 / NCIMB 13794 / A6) (Arthrobacter chlorophenolicus).